We begin with the raw amino-acid sequence, 258 residues long: Steroid 5-alpha-reductase DET2 (258 aa).

6 helical membrane passes run 8–28, 49–69, 77–97, 109–129, 144–164, and 201–221; these read FHYC…SLYF, LAWF…FPSG, SFLL…LYPL, FPVS…YLQA, LFWW…WVNV, and IMEW…GFFL.

It belongs to the steroid 5-alpha reductase family. Accumulates in fibers (seed trichomes) during both their initiation and elongation phases. Also present in roots, hypocotyls, leaves, flowers and ovules, and barely in cotyledons.

The protein localises to the membrane. The enzyme catalyses a 3-oxo-5alpha-steroid + NADP(+) = a 3-oxo-Delta(4)-steroid + NADPH + H(+). It functions in the pathway plant hormone biosynthesis; brassinosteroid biosynthesis. Functionally, involved in a reduction step in the biosynthesis of the plant steroid, brassinolide (BL). Promotes cotton fibers (seed trichomes) initiation and elongation. This is Steroid 5-alpha-reductase DET2 from Gossypium hirsutum (Upland cotton).